A 1556-amino-acid polypeptide reads, in one-letter code: Ras guanine nucleotide exchange factor G (1556 aa).

Disordered regions lie at residues 19 to 63 (IGNI…KNRG), 93 to 141 (LQLN…SSTT), 163 to 239 (SHVT…LSPS), and 254 to 296 (ATDS…NNNS). 2 stretches are compositionally biased toward low complexity: residues 25 to 54 (NNNN…SGSN) and 96 to 141 (NDTD…SSTT). The segment covering 170–186 (DDDDDDESSSSEEDFDS) has biased composition (acidic residues). Residues 196 to 216 (TSSTTATTTTTTTSVSPLTSS) show a composition bias toward low complexity. The span at 256–271 (DSDNQSLEPCNNKTIV) shows a compositional bias: polar residues. Low complexity predominate over residues 279–295 (DNNNNHNNNNNNNNNNN). One can recognise an F-box 1 domain in the interval 307–353 (NKTFLDLDEKIYLKIFGYLFAEDLCSINRVSKHLCNIINNQQLWKDL). The interval 385–416 (NNNNNNNNNNNNNNNNSNISNNNNNINNSNGN) is disordered. One can recognise an F-box 2 domain in the interval 679 to 726 (VFDISRVSDILLIKIFRNLDSIKDLSVCQRVSKRWNKAIAISSLWEQL). Disordered regions lie at residues 762–815 (QPSP…NGLN) and 827–1101 (GSNL…ITNN). A compositionally biased stretch (low complexity) spans 827-848 (GSNLSNGGNSGSSFSPFNPLSG). Over residues 849–866 (SNGGSSFGPFGSGGGGGS) the composition is skewed to gly residues. 2 stretches are compositionally biased toward low complexity: residues 867 to 880 (NSNI…LNSS) and 888 to 910 (FLAM…TIST). Over residues 911–935 (NCTPTGGSTTNSPNFQSPMVSSSTV) the composition is skewed to polar residues. Low complexity-rich tracts occupy residues 943 to 957 (SPNL…ISLS) and 972 to 1053 (PDSS…IQPI). Residues 1059 to 1076 (VNNNGSQSDLSKISDLNA) show a composition bias toward polar residues. A compositionally biased stretch (low complexity) spans 1077-1101 (NPNTTTTTTTNTIESSSSSSSITNN). The 129-residue stretch at 1116–1244 (MINVQKLMNL…LIRSFSRKLS (129 aa)) folds into the N-terminal Ras-GEF domain. A disordered region spans residues 1254 to 1279 (IGITGGKSSRKGGGSGSGSGSGGGSG). Gly residues predominate over residues 1264-1279 (KGGGSGSGSGSGGGSG). Residues 1317 to 1548 (PAEEIAKQLT…YRVSMQREPR (232 aa)) form the Ras-GEF domain.

Its function is as follows. Promotes the exchange of Ras-bound GDP by GTP. The sequence is that of Ras guanine nucleotide exchange factor G (gefG) from Dictyostelium discoideum (Social amoeba).